We begin with the raw amino-acid sequence, 557 residues long: Protein PECTIC ARABINOGALACTAN SYNTHESIS-RELATED (557 aa).

The interval 1–54 (MAELRHSSSLGSRSSSSPLRAAGDEDSSSPHVHDHSPNGGDDEDGRPRHPSRDR) is disordered. The Cytoplasmic portion of the chain corresponds to 1–79 (MAELRHSSSL…DPRVSPQKNK (79 aa)). Residues 7 to 20 (SSSLGSRSSSSPLR) are compositionally biased toward low complexity. The span at 45–54 (GRPRHPSRDR) shows a compositional bias: basic and acidic residues. A helical; Signal-anchor for type II membrane protein membrane pass occupies residues 80-100 (ISLLLILILAIASLISVYGII). At 101-557 (NHLNAPYLCK…NPLTPCMCKA (457 aa)) the chain is on the lumenal side. N-linked (GlcNAc...) asparagine glycans are attached at residues Asn156, Asn188, and Asn324. Substrate is bound at residue 336–338 (HLR). N-linked (GlcNAc...) asparagine glycosylation is present at Asn375.

The protein belongs to the glycosyltransferase GT106 family. As to expression, widely expressed with the highest expression in reproductive tissues and roots.

It is found in the golgi apparatus membrane. The protein operates within glycan metabolism; pectin biosynthesis. Its function is as follows. Glycosyltransferase involved in the biosynthesis of pectic type-II arabinogalactans. In Arabidopsis thaliana (Mouse-ear cress), this protein is Protein PECTIC ARABINOGALACTAN SYNTHESIS-RELATED.